Here is a 214-residue protein sequence, read N- to C-terminus: Adenylate kinase (214 aa).

ATP is bound at residue 10 to 15; it reads GAGKGT. Positions 30–59 are NMP; sequence STGDMLRAAVKAGTPLGVKAQEIMIQGGLV. AMP contacts are provided by residues T31, R36, 57–59, 85–88, and Q92; these read GLV and GFPR. The segment at 126–163 is LID; sequence GRRSCSSCGKGYHLVFDPPLRAGVCDVCGSGLVQRADD. R127 contributes to the ATP binding site. C130, C133, C150, and C153 together coordinate Zn(2+). The AMP site is built by R160 and R171. Residue G199 participates in ATP binding.

Belongs to the adenylate kinase family. Monomer.

It localises to the cytoplasm. The enzyme catalyses AMP + ATP = 2 ADP. It participates in purine metabolism; AMP biosynthesis via salvage pathway; AMP from ADP: step 1/1. Catalyzes the reversible transfer of the terminal phosphate group between ATP and AMP. Plays an important role in cellular energy homeostasis and in adenine nucleotide metabolism. This Trichlorobacter lovleyi (strain ATCC BAA-1151 / DSM 17278 / SZ) (Geobacter lovleyi) protein is Adenylate kinase.